Reading from the N-terminus, the 270-residue chain is Shikimate dehydrogenase (NADP(+)) (270 aa).

Shikimate contacts are provided by residues S14–S16 and T61. K65 acts as the Proton acceptor in catalysis. The shikimate site is built by N86 and D101. Residues G126–A130, N150–K155, and M215 contribute to the NADP(+) site. Residue Y217 coordinates shikimate. G238 contacts NADP(+).

The protein belongs to the shikimate dehydrogenase family. In terms of assembly, homodimer.

The enzyme catalyses shikimate + NADP(+) = 3-dehydroshikimate + NADPH + H(+). Its pathway is metabolic intermediate biosynthesis; chorismate biosynthesis; chorismate from D-erythrose 4-phosphate and phosphoenolpyruvate: step 4/7. Its function is as follows. Involved in the biosynthesis of the chorismate, which leads to the biosynthesis of aromatic amino acids. Catalyzes the reversible NADPH linked reduction of 3-dehydroshikimate (DHSA) to yield shikimate (SA). In Methylobacillus flagellatus (strain ATCC 51484 / DSM 6875 / VKM B-1610 / KT), this protein is Shikimate dehydrogenase (NADP(+)).